A 119-amino-acid polypeptide reads, in one-letter code: Toxin ICK-9 (119 aa).

Residues M1–A19 form the signal peptide. 4 disulfide bridges follow: C59/C74, C67/C80, C71/C116, and C73/C87.

The protein belongs to the neurotoxin 25 family. ICK-8 subfamily. Expressed by the venom gland.

It is found in the secreted. Ion channel inhibitor. This Trittame loki (Brush-footed trapdoor spider) protein is Toxin ICK-9.